The primary structure comprises 62 residues: Amolopin-P1 (62 aa).

The signal sequence occupies residues 1–22 (MFPMKKSLLLLFFFGPISLSFC). The propeptide occupies 23 to 44 (DQERGADEEENGGEVTEQEVKR).

As to expression, expressed by the skin glands.

The protein localises to the secreted. In terms of biological role, antimicrobial peptide with activity against Gram-positive bacteria. Has been tested against S.aureus (MIC=37.5 ug/mL), against B.pumilus (MIC=75.0 ug/mL), B.cereus (no activity detected). Does not show activity against Gram-negative bacteria (E.coli, B.dysenteriae, A.calcoaceticus, P.aeruginosa) and fungi (C.albicans). Does not show hemolytic activity against rabbit erythrocytes. The polypeptide is Amolopin-P1 (Amolops loloensis (Lolokou Sucker Frog)).